The primary structure comprises 159 residues: Cytochrome c-type biogenesis protein CcmE (159 aa).

At 1-23 the chain is on the cytoplasmic side; sequence MNNSSLENSASLKVILKQRKKKR. A helical; Signal-anchor for type II membrane protein transmembrane segment spans residues 24–44; it reads LLIILLCCLVMAIAASLVVYA. Topologically, residues 45 to 159 are periplasmic; that stretch reads MRHAVSFFRM…RLKKHYSVEK (115 aa). Residues His138 and Tyr142 each contribute to the heme site.

It belongs to the CcmE/CycJ family.

Its subcellular location is the cell inner membrane. Functionally, heme chaperone required for the biogenesis of c-type cytochromes. Transiently binds heme delivered by CcmC and transfers the heme to apo-cytochromes in a process facilitated by CcmF and CcmH. The protein is Cytochrome c-type biogenesis protein CcmE of Bartonella tribocorum (strain CIP 105476 / IBS 506).